Consider the following 631-residue polypeptide: Alpha-dioxygenase 2 (631 aa).

An N-terminal signal peptide occupies residues 1-20; it reads MGFSPSSSWFLHPQLHHVVS. His157 is a heme b binding site. Tyr378 acts as the Proton acceptor in catalysis. Heme b is bound at residue His381. Asn583 is a glycosylation site (N-linked (GlcNAc...) asparagine).

It belongs to the peroxidase family. Heme b is required as a cofactor. As to expression, expressed in seedlings (cotyledons, young leaves, and hypocotyls), flowers, siliques and old leaves.

Functionally, alpha-dioxygenase that catalyzes the primary oxygenation of fatty acids into oxylipins. May be involved in the senescence process. The protein is Alpha-dioxygenase 2 (DOX2) of Arabidopsis thaliana (Mouse-ear cress).